The chain runs to 159 residues: Ribosome maturation factor RimP (159 aa).

The protein belongs to the RimP family.

Its subcellular location is the cytoplasm. Required for maturation of 30S ribosomal subunits. This is Ribosome maturation factor RimP from Trichlorobacter lovleyi (strain ATCC BAA-1151 / DSM 17278 / SZ) (Geobacter lovleyi).